Here is a 184-residue protein sequence, read N- to C-terminus: ATP-dependent protease subunit HslV (184 aa).

The active site involves Thr-11. Na(+)-binding residues include Ala-165, Cys-168, and Thr-171.

Belongs to the peptidase T1B family. HslV subfamily. A double ring-shaped homohexamer of HslV is capped on each side by a ring-shaped HslU homohexamer. The assembly of the HslU/HslV complex is dependent on binding of ATP.

The protein resides in the cytoplasm. It carries out the reaction ATP-dependent cleavage of peptide bonds with broad specificity.. Its activity is regulated as follows. Allosterically activated by HslU binding. Protease subunit of a proteasome-like degradation complex believed to be a general protein degrading machinery. The polypeptide is ATP-dependent protease subunit HslV (Zymomonas mobilis subsp. mobilis (strain ATCC 31821 / ZM4 / CP4)).